The sequence spans 263 residues: uncharacterized protein (263 aa).

Positions 1–22 (MEYLKRLALLISVIILTIFIMG) are cleaved as a signal peptide. A lipid anchor (N-palmitoyl cysteine) is attached at C23. Residue C23 is the site of S-diacylglycerol cysteine attachment.

It belongs to the staphylococcal tandem lipoprotein family.

It localises to the cell membrane. This is an uncharacterized protein from Staphylococcus aureus (strain COL).